We begin with the raw amino-acid sequence, 122 residues long: Large ribosomal subunit protein uL14 (122 aa).

It belongs to the universal ribosomal protein uL14 family. Part of the 50S ribosomal subunit. Forms a cluster with proteins L3 and L19. In the 70S ribosome, L14 and L19 interact and together make contacts with the 16S rRNA in bridges B5 and B8.

In terms of biological role, binds to 23S rRNA. Forms part of two intersubunit bridges in the 70S ribosome. The polypeptide is Large ribosomal subunit protein uL14 (Paracoccus denitrificans (strain Pd 1222)).